Here is a 566-residue protein sequence, read N- to C-terminus: 3-oxosteroid 1-dehydrogenase (566 aa).

10–39 (DVVVVGSGAAGMVAALVAAHRGLSTVVVEK) contacts FAD.

It belongs to the FAD-dependent oxidoreductase 2 family. 3-oxosteroid dehydrogenase subfamily. It depends on FAD as a cofactor.

It carries out the reaction a 3-oxosteroid + A = a 3-oxo-Delta(1)-steroid + AH2. The catalysed reaction is a 3-oxo-Delta(4)-steroid + A = a 3-oxo-Delta(1,4)-steroid + AH2. Functionally, involved in the degradation of cholesterol. Catalyzes the elimination of the C-1 and C-2 hydrogen atoms of the A-ring from the polycyclic ring structure of 3-ketosteroids. Is also involved in the formation of 3-keto-1,4-diene-steroid from 3-keto-4-ene-steroid. The polypeptide is 3-oxosteroid 1-dehydrogenase (kstD) (Mycobacterium tuberculosis (strain CDC 1551 / Oshkosh)).